A 339-amino-acid polypeptide reads, in one-letter code: MAGSTSSLVICAIGIYATFLTWALVQEPLATRTWPNSMGKFQFPNVISLIQASVAMMMGYLYLNWKKVEYPPRKMIKDHWKQLMLISFTQSSSGPLATTSLKHVDYLTYMLAKSCKMIPVLLVHLLLYRTPIASQKKVVALLVSLGVTIFTIGGNDGKKLKRSFNESGNDNKLQGFGLLFSSLFLDGLTNATQDKLLKANKAKEKGKQTLITGAHLMFTLNLFVILWNILYFIVIDCKQWDNAVSVLTMDPQVWGYLMLYSFCGAMGQCFIFYTLEQFGSLVLIMITVTRKMVSMILSIIVFGKSVRFQQWVGMFIVFGGITWEALNKKKANIPKAKSA.

Residues 1–4 (MAGS) lie on the Lumenal side of the membrane. A helical transmembrane segment spans residues 5–25 (TSSLVICAIGIYATFLTWALV). Topologically, residues 26–42 (QEPLATRTWPNSMGKFQ) are cytoplasmic. A helical transmembrane segment spans residues 43–63 (FPNVISLIQASVAMMMGYLYL). Topologically, residues 64-106 (NWKKVEYPPRKMIKDHWKQLMLISFTQSSSGPLATTSLKHVDY) are lumenal. Residues 107 to 127 (LTYMLAKSCKMIPVLLVHLLL) form a helical membrane-spanning segment. Over 128–136 (YRTPIASQK) the chain is Cytoplasmic. Residues 137 to 157 (KVVALLVSLGVTIFTIGGNDG) form a helical membrane-spanning segment. Residues 158 to 174 (KKLKRSFNESGNDNKLQ) lie on the Lumenal side of the membrane. N165 carries an N-linked (GlcNAc...) asparagine glycan. A helical transmembrane segment spans residues 175–192 (GFGLLFSSLFLDGLTNAT). The Cytoplasmic portion of the chain corresponds to 193 to 214 (QDKLLKANKAKEKGKQTLITGA). The helical transmembrane segment at 215 to 235 (HLMFTLNLFVILWNILYFIVI) threads the bilayer. The Lumenal segment spans residues 236 to 245 (DCKQWDNAVS). The helical transmembrane segment at 246-266 (VLTMDPQVWGYLMLYSFCGAM) threads the bilayer. Residues 267–280 (GQCFIFYTLEQFGS) are Cytoplasmic-facing. A helical transmembrane segment spans residues 281–303 (LVLIMITVTRKMVSMILSIIVFG). Topologically, residues 304–307 (KSVR) are lumenal. The helical transmembrane segment at 308–327 (FQQWVGMFIVFGGITWEALN) threads the bilayer. Topologically, residues 328-339 (KKKANIPKAKSA) are cytoplasmic.

This sequence belongs to the nucleotide-sugar transporter family. SLC35B subfamily.

The protein localises to the endoplasmic reticulum membrane. May be involved in specific transport of UDP-Gal from the cytosol to the Golgi lumen. Involved in the maintenance of optimal conditions for the folding of secretory pathway proteins in the endoplasmic reticulum. Overexpression confers resistance to the immunosuppressive drug, leflunomide. This is UDP-galactose transporter homolog 1 (HUT1) from Saccharomyces cerevisiae (strain ATCC 204508 / S288c) (Baker's yeast).